We begin with the raw amino-acid sequence, 329 residues long: DNA-directed RNA polymerase subunit alpha (329 aa).

The segment at 1-234 (MQGSVTEFLK…EQLDAFVELR (234 aa)) is alpha N-terminal domain (alpha-NTD). An alpha C-terminal domain (alpha-CTD) region spans residues 248 to 329 (FDPILLRPVD…WPPASLADDL (82 aa)).

The protein belongs to the RNA polymerase alpha chain family. In terms of assembly, homodimer. The RNAP catalytic core consists of 2 alpha, 1 beta, 1 beta' and 1 omega subunit. When a sigma factor is associated with the core the holoenzyme is formed, which can initiate transcription.

It catalyses the reaction RNA(n) + a ribonucleoside 5'-triphosphate = RNA(n+1) + diphosphate. Functionally, DNA-dependent RNA polymerase catalyzes the transcription of DNA into RNA using the four ribonucleoside triphosphates as substrates. This chain is DNA-directed RNA polymerase subunit alpha, found in Shewanella amazonensis (strain ATCC BAA-1098 / SB2B).